Here is a 166-residue protein sequence, read N- to C-terminus: Phospholipase A2 inhibitor CgMIP-II (166 aa).

An N-terminal signal peptide occupies residues 1–19 (MRLILLSGLLLLGTFLANG). The 116-residue stretch at 46 to 161 (LRYALMTVHN…CDDNLLVVCE (116 aa)) folds into the C-type lectin domain. 2 disulfides stabilise this stretch: Cys-83-Cys-160 and Cys-138-Cys-152. An N-linked (GlcNAc...) asparagine glycan is attached at Asn-122.

It belongs to the alpha-type phospholipase A2 inhibitor family. In terms of assembly, homomer composed of 20-25-kDa subunits that form oligomers of 180 kDa. Post-translationally, N-glycosylated. The glycosidic chain may contain superficial sialic acid residues. Expressed by the liver.

The protein resides in the secreted. Functionally, selectively inhibits the toxic properties of myotoxin-II from the same venom (AC P81165). Does not inhibit PLA2, anti-coagulant and lethal activities of the basic myotoxin I from the same venom (AC P0DQP6), nor the different crotoxin forms (heterodimer or subunit B alone). Does not block the enzymatic activity of crude acidic PLA2 fractions from the same venom. The protein is Phospholipase A2 inhibitor CgMIP-II of Cerrophidion godmani (Porthidium godmani).